The primary structure comprises 280 residues: Golgi phosphoprotein 3-like B (280 aa).

The disordered stretch occupies residues 1–32; sequence MTTLIRRGRRAEEGQERRADSEDSIKDKDEED. A compositionally biased stretch (basic and acidic residues) spans 10–32; sequence RAEEGQERRADSEDSIKDKDEED. 4 residues coordinate a 1,2-diacyl-sn-glycero-3-phospho-(1D-myo-inositol 4-phosphate): Trp62, Arg71, Arg152, and Arg155. The beta-hairpin required for oligomerization stretch occupies residues 171 to 182; the sequence is EKQNFLLFDMTT.

It belongs to the GOLPH3/VPS74 family. As to quaternary structure, homooligomer.

It localises to the golgi apparatus. Its subcellular location is the golgi stack membrane. It is found in the trans-Golgi network membrane. Its function is as follows. Phosphatidylinositol-4-phosphate-binding protein that may play a role in the process of vesicle budding at the Golgi and anterograde transport to the plasma membrane. The protein is Golgi phosphoprotein 3-like B (golph3l-b) of Xenopus laevis (African clawed frog).